A 158-amino-acid polypeptide reads, in one-letter code: Style cell-cycle inhibitor 1-B (158 aa).

2 stretches are compositionally biased toward basic and acidic residues: residues 1–11 (MGSDKKTTEEK) and 22–47 (PRDEVKSKRQNIKGDEERRKEKDKSK). A disordered region spans residues 1–88 (MGSDKKTTEE…DKSKNKFEEL (88 aa)). Basic residues-rich tracts occupy residues 48-58 (KEKHKSHKSKC) and 67-81 (GEKHKTKSHKHKDKS).

Specifically expressed in flowers pistils, especially in stigmas and styles. Barely detected in roots, stems, leaves, sepals, petals and stamen.

Its subcellular location is the nucleus. Its function is as follows. Component of the auxin signaling transduction pathway that regulates cell proliferation and differentiation during flowers stigmas and styles development. Involved in the regulation of auxin-related genes. This is Style cell-cycle inhibitor 1-B from Nicotiana tabacum (Common tobacco).